The following is a 236-amino-acid chain: uncharacterized protein (236 aa).

NADP(+) is bound by residues D22, N49, and K82. Residues S100 and Y114 each act as proton donor in the active site. Residues Y114 and K118 each contribute to the NADP(+) site. Catalysis depends on K118, which acts as the Lowers pKa of active site Tyr.

This sequence belongs to the short-chain dehydrogenases/reductases (SDR) family.

The protein localises to the cytoplasm. It is found in the nucleus. This is an uncharacterized protein from Schizosaccharomyces pombe (strain 972 / ATCC 24843) (Fission yeast).